Here is a 292-residue protein sequence, read N- to C-terminus: Elongation factor Ts (292 aa).

Residues 82 to 85 (TDFV) form an involved in Mg(2+) ion dislocation from EF-Tu region.

It belongs to the EF-Ts family.

It localises to the cytoplasm. In terms of biological role, associates with the EF-Tu.GDP complex and induces the exchange of GDP to GTP. It remains bound to the aminoacyl-tRNA.EF-Tu.GTP complex up to the GTP hydrolysis stage on the ribosome. The sequence is that of Elongation factor Ts from Bordetella avium (strain 197N).